Reading from the N-terminus, the 1051-residue chain is Kinesin-like protein KIN-UC (1051 aa).

Low complexity-rich tracts occupy residues Met1–Ser12, Asn28–Ser39, and Ser64–Arg90. Disordered stretches follow at residues Met1 to Ser39 and Pro51 to Val109. The Kinesin motor domain maps to Arg104 to Ile441. ATP is bound at residue Gly189–Thr196. Positions Arg411 to Gly419 match the D-BOX motif. Coiled coils occupy residues Asp452–Gln534 and Asp568–Met761. The span at Asn753–Ser766 shows a compositional bias: basic and acidic residues. A disordered region spans residues Asn753–Leu788. The segment covering Ser772–Leu788 has biased composition (polar residues). ARM repeat units lie at residues Arg792–Ala831, Glu833–Met873, and Glu875–Gly915. An ARM 4; degenerate repeat occupies Glu917–Lys956.

The protein belongs to the TRAFAC class myosin-kinesin ATPase superfamily. Kinesin family. Ungrouped subfamily. In terms of assembly, interacts (via C-terminus) with NEK5. Expressed in young root hair-forming cells and in root hair-producing cells at the boundary between the hypocotyl and root. Expressed in cotyledons, young leaves, trichomes and flowers.

The protein localises to the cytoplasm. The protein resides in the cytoskeleton. It is found in the spindle. It localises to the phragmoplast. In terms of biological role, acts as a plus-end microtubule-dependent motor protein. Involved in the control of root hair tip growth by promoting microtubule depolymerization and limiting the accumulation of endoplasmic microtubules. In vitro, binds to polymerized actin through ARM repeats, and to polymerized tubulin through N-terminal motor domain. The chain is Kinesin-like protein KIN-UC from Arabidopsis thaliana (Mouse-ear cress).